The chain runs to 107 residues: Nucleoid-associated protein NE0434 (107 aa).

This sequence belongs to the YbaB/EbfC family. As to quaternary structure, homodimer.

Its subcellular location is the cytoplasm. It localises to the nucleoid. Binds to DNA and alters its conformation. May be involved in regulation of gene expression, nucleoid organization and DNA protection. The polypeptide is Nucleoid-associated protein NE0434 (Nitrosomonas europaea (strain ATCC 19718 / CIP 103999 / KCTC 2705 / NBRC 14298)).